Reading from the N-terminus, the 1023-residue chain is DNA polymerase (1023 aa).

Residues 726–751 are disordered; it reads QTDATRKHRQCTPTSNSSSDEDAPFY.

This sequence belongs to the DNA polymerase type-B family. In terms of assembly, heterodimer with the terminal protein; this heterodimer binds to bp 9 to 18 of the genome. Forms a complex with viral pTP, DBP and hosts NFIA and POU2F1/OCT1 for initiation of replication.

It is found in the host nucleus. The catalysed reaction is DNA(n) + a 2'-deoxyribonucleoside 5'-triphosphate = DNA(n+1) + diphosphate. Eukaryotic-type DNA polymerase involved in viral genomic replication. DNA synthesis is protein primed, and acts in a strand displacement replication. Assembles in complex with viral pTP, DBP, host NFIA and host POU2F1/OCT1 on viral origin of replication. The polymerase covalently transfers dCMP onto pTP, thereby initiating complementary strand synthesis. The sequence is that of DNA polymerase from Bovine adenovirus B serotype 3 (BAdV-3).